Here is an 888-residue protein sequence, read N- to C-terminus: Serine/threonine-protein phosphatase 1 regulatory subunit 10 (888 aa).

The interaction with TOX4 stretch occupies residues 1–348; that stretch reads MGSGPIDPKE…EPAPPAEPMD (348 aa). Residues 73-147 enclose the TFIIS N-terminal domain; it reads KLLNNWLTYS…SDWMAVIRSQ (75 aa). Disordered regions lie at residues 147 to 213, 247 to 270, 306 to 400, and 534 to 853; these read QSST…STGL, SATA…NTAP, KKKK…KTVT, and VETL…HGGD. 2 stretches are compositionally biased toward basic and acidic residues: residues 153 to 166 and 174 to 196; these read AEKD…EGKS and PLTE…EKPK. Lys179 participates in a covalent cross-link: Glycyl lysine isopeptide (Lys-Gly) (interchain with G-Cter in SUMO2). A compositionally biased stretch (low complexity) spans 248-258; the sequence is ATAAPGDAAPP. Lys262 is covalently cross-linked (Glycyl lysine isopeptide (Lys-Gly) (interchain with G-Cter in SUMO2)). Ser313 is modified (phosphoserine). Positions 325–334 are enriched in polar residues; that stretch reads KTSTEQSTAK. Ser382 carries the phosphoserine modification. The interval 388–417 is necessary for interaction with PPP1CA; it reads QLTRKGRKRKTVTWPEEGKLREYFYFELDE. The necessary for interaction with PPP1CC stretch occupies residues 393–408; that stretch reads GRKRKTVTWPEEGKLR. The PP1-binding motif motif lies at 394–423; it reads RKRKTVTWPEEGKLREYFYFELDETERVNV. At Thr398 the chain carries Phosphothreonine. An interaction with WDR82 region spans residues 418-619; it reads TERVNVNKIK…LKQMLVPHGL (202 aa). Residues 540–551 are compositionally biased toward gly residues; the sequence is GGSGGSPDGAGG. Phosphoserine is present on residues Ser545 and Ser591. Residues 583–595 are compositionally biased toward polar residues; the sequence is EILTSIMGSPNSH. Over residues 596-611 the composition is skewed to basic and acidic residues; that stretch reads PSEELLKQPDYSDKLK. The span at 644–655 shows a compositional bias: pro residues; it reads PPGPGGPMPGPH. Arg665 carries the omega-N-methylarginine modification. The segment covering 674-690 has biased composition (low complexity); the sequence is RGGDPFWDGPGDPMRGG. Residues Arg693 and Arg737 each carry the omega-N-methylarginine modification. 2 stretches are compositionally biased toward gly residues: residues 724 to 762 and 784 to 794; these read ARGG…GSMG and GPGGNMGGSGG. Positions 811–851 are enriched in basic and acidic residues; sequence PHDVPSHRGHDHRGPPPHEHRGHDGHGGGGHRGHDGGHSHG. A C3H1-type zinc finger spans residues 854-882; it reads MSNRPVCRHFMMKGNCRYENNCAFYHPGV.

As to quaternary structure, component of the PNUTS-PP1 complex (also named PTW/PP1 complex), composed of PPP1R10/PNUTS, TOX4, WDR82, and PPP1CA (or PPP1CB or PPP1CC). Phosphorylated on Ser-398 by PKA within the region necessary for interaction with PPP1CA.

The protein resides in the nucleus. Its subcellular location is the chromosome. Substrate-recognition component of the PNUTS-PP1 protein phosphatase complex, a protein phosphatase 1 (PP1) complex that promotes RNA polymerase II transcription pause-release, allowing transcription elongation. Promoter-proximal pausing by RNA polymerase II is a transcription halt following transcription initiation but prior to elongation, which acts as a checkpoint to control that transcripts are favorably configured for transcriptional elongation. The PNUTS-PP1 complex mediates the release of RNA polymerase II from promoter-proximal region of genes by catalyzing dephosphorylation of proteins involved in transcription, such as AFF4, CDK9, MEPCE, INTS12, NCBP1, POLR2M/GDOWN1 and SUPT6H. The PNUTS-PP1 complex also regulates RNA polymerase II transcription termination by mediating dephosphorylation of SUPT5H in termination zones downstream of poly(A) sites, thereby promoting deceleration of RNA polymerase II transcription. PNUTS-PP1 complex is also involved in the response to replication stress by mediating dephosphorylation of POLR2A at 'Ser-5' of the CTD, promoting RNA polymerase II degradation. The PNUTS-PP1 complex also plays a role in the control of chromatin structure and cell cycle progression during the transition from mitosis into interphase. PNUTS-PP1 complex mediates dephosphorylation of MYC, promoting MYC stability by preventing MYC ubiquitination by the SCF(FBXW7) complex. In addition to acts as a substrate-recognition component, PPP1R10/PNUTS also acts as a nuclear targeting subunit for the PNUTS-PP1 complex. In some context, PPP1R10/PNUTS also acts as an inhibitor of protein phosphatase 1 (PP1) activity by preventing access to substrates, such as RB. In Mus musculus (Mouse), this protein is Serine/threonine-protein phosphatase 1 regulatory subunit 10.